The chain runs to 808 residues: Zinc finger protein 148 (808 aa).

2 disordered regions span residues 15–86 (SPVG…ISQD) and 131–162 (DSLI…SPAK). Positions 56-73 (AEDDDDEDEEEDDDDDLA) are enriched in acidic residues. The segment covering 150–159 (HKKKKRKQRS) has biased composition (basic residues). 4 consecutive C2H2-type zinc fingers follow at residues 180–202 (HICE…VFIH), 208–230 (FQCN…EKIH), 236–258 (FRCD…KRTH), and 264–287 (YQCD…RMCH). 3 disordered regions span residues 305–338 (RTPE…ASIT), 596–617 (SINS…QAPP), and 705–736 (SFSG…DPQS). 2 stretches are compositionally biased toward polar residues: residues 705–718 (SFSG…SVSP) and 725–736 (QVTSPKKTDPQS).

It belongs to the krueppel C2H2-type zinc-finger protein family.

The protein localises to the nucleus. In terms of biological role, involved in transcriptional regulation. Represses the transcription of a number of genes. Required for primitive and definitive hematopoiesis during embryonic development. The chain is Zinc finger protein 148 (znf148) from Danio rerio (Zebrafish).